A 399-amino-acid chain; its full sequence is Phospholipase C (399 aa).

Positions 1–28 (MNKKKILKFICSAVLSFTLFSGYKSYAW) are cleaved as a signal peptide. Residues tryptophan 28, histidine 38, aspartate 83, histidine 95, histidine 153, aspartate 157, histidine 163, histidine 175, and glutamate 179 each contribute to the Zn(2+) site. One can recognise a Zn-dependent PLC domain in the interval 29 to 277 (DGKVDGTGTH…NEVSGTINTT (249 aa)). Residues 275–282 (NTTENSKI) form a linker region. In terms of domain architecture, PLAT spans 283–399 (NEIMVVIKTA…DNKTFYINNK (117 aa)). 9 residues coordinate Ca(2+): glycine 298, threonine 299, aspartate 300, aspartate 320, asparagine 321, glycine 323, asparagine 324, aspartate 325, and aspartate 363.

Belongs to the bacterial zinc-metallophospholipase C family. Ca(2+) is required as a cofactor. Zn(2+) serves as cofactor.

It is found in the secreted. The enzyme catalyses a 1,2-diacyl-sn-glycero-3-phosphocholine + H2O = phosphocholine + a 1,2-diacyl-sn-glycerol + H(+). Its function is as follows. Bacterial hemolysins are exotoxins that attack blood cell membranes and cause cell rupture. Binds to eukaryotic membranes where it hydrolyzes phosphatidylcholine, sphingomyelin and phosphatidylethanolamine. The diacylglycerol produced can activate both the arachidonic acid pathway, leading to modulation of the inflammatory response cascade and thrombosis, and protein kinase C, leading to activation of eukaryotic phospholipases and further membrane damage. The chain is Phospholipase C (plc) from Clostridium haemolyticum.